Consider the following 390-residue polypeptide: 3-ketoacyl-CoA thiolase (390 aa).

Catalysis depends on Cys-95, which acts as the Acyl-thioester intermediate. Catalysis depends on proton acceptor residues His-346 and Cys-376.

Belongs to the thiolase-like superfamily. Thiolase family. As to quaternary structure, heterotetramer of two alpha chains (FadB) and two beta chains (FadA).

Its subcellular location is the cytoplasm. The catalysed reaction is an acyl-CoA + acetyl-CoA = a 3-oxoacyl-CoA + CoA. It participates in lipid metabolism; fatty acid beta-oxidation. In terms of biological role, catalyzes the final step of fatty acid oxidation in which acetyl-CoA is released and the CoA ester of a fatty acid two carbons shorter is formed. The sequence is that of 3-ketoacyl-CoA thiolase from Psychrobacter cryohalolentis (strain ATCC BAA-1226 / DSM 17306 / VKM B-2378 / K5).